The sequence spans 87 residues: Phosphoribosyl-ATP pyrophosphatase (87 aa).

The protein belongs to the PRA-PH family.

It is found in the cytoplasm. It carries out the reaction 1-(5-phospho-beta-D-ribosyl)-ATP + H2O = 1-(5-phospho-beta-D-ribosyl)-5'-AMP + diphosphate + H(+). The protein operates within amino-acid biosynthesis; L-histidine biosynthesis; L-histidine from 5-phospho-alpha-D-ribose 1-diphosphate: step 2/9. The sequence is that of Phosphoribosyl-ATP pyrophosphatase from Clavibacter sepedonicus (Clavibacter michiganensis subsp. sepedonicus).